A 117-amino-acid chain; its full sequence is Calcitonin receptor-stimulating peptide 2 (117 aa).

The signal sequence occupies residues 1–25; the sequence is MGFWKFPPFLVLSILVLYQAGMFHT. The propeptide occupies 26–79; the sequence is APVRLPLESSFDSATLTEEEVSLLLVAMVKDYVQMKATVLEQESEDFSITAQEK. The cysteines at positions 81 and 86 are disulfide-linked.

The protein belongs to the calcitonin family. Mainly expressed in the thyroid gland and CNS. Found in the nerve cells of the cerebrum, hippocampus, hypothalamus, pons/midbrain and thalamus. Also detected in the glia-like cells of pons/midbrain and in meninx of tactus opticus.

It localises to the secreted. The polypeptide is Calcitonin receptor-stimulating peptide 2 (CRSP2) (Sus scrofa (Pig)).